A 348-amino-acid polypeptide reads, in one-letter code: Phospho-2-dehydro-3-deoxyheptonate aldolase, Trp-sensitive (348 aa).

The protein belongs to the class-I DAHP synthase family.

It carries out the reaction D-erythrose 4-phosphate + phosphoenolpyruvate + H2O = 7-phospho-2-dehydro-3-deoxy-D-arabino-heptonate + phosphate. Its pathway is metabolic intermediate biosynthesis; chorismate biosynthesis; chorismate from D-erythrose 4-phosphate and phosphoenolpyruvate: step 1/7. Its function is as follows. Stereospecific condensation of phosphoenolpyruvate (PEP) and D-erythrose-4-phosphate (E4P) giving rise to 3-deoxy-D-arabino-heptulosonate-7-phosphate (DAHP). In Salmonella typhimurium (strain LT2 / SGSC1412 / ATCC 700720), this protein is Phospho-2-dehydro-3-deoxyheptonate aldolase, Trp-sensitive (aroH).